Reading from the N-terminus, the 303-residue chain is MNKQNFHHISVLKKEAIDFLKIKPEGIYVDATLGQCGHTIEIANLLQQGFLYSFDQDVEACTNAKKTLSPHLPIEIIHSIFRIXSPISTTKSFSLDGILFDLGLSSCQIDNPQRGFSYLHNTPLDMRMNINQTITAQYILNNYSFAQLKNIFKLYGEVKNASLVVSEIIKQRPLQTSYDLVSITDRFCNLQKGHSAKKIFQALRIEVNQELESLKQALEQSLDLLKPNARIVVISFHSLEDRIIKHFFKKHSTFVLPKKLPIAIIPQTPLSIITKKAFLPSEEEMQNNSRSISAKLRVAVKNV.

S-adenosyl-L-methionine contacts are provided by residues 36–38 (CGH), Asp55, Phe81, Asp101, and Gln108.

It belongs to the methyltransferase superfamily. RsmH family.

It localises to the cytoplasm. It carries out the reaction cytidine(1402) in 16S rRNA + S-adenosyl-L-methionine = N(4)-methylcytidine(1402) in 16S rRNA + S-adenosyl-L-homocysteine + H(+). In terms of biological role, specifically methylates the N4 position of cytidine in position 1402 (C1402) of 16S rRNA. The chain is Ribosomal RNA small subunit methyltransferase H from Aster yellows witches'-broom phytoplasma (strain AYWB).